The following is a 382-amino-acid chain: uncharacterized protein (382 aa).

Residues 1–92 (MQFLSVIPEQ…GATAYRNTEF (92 aa)) form the PE domain. 8 consecutive transmembrane segments (helical) span residues 23 to 43 (SALSASYAAAAGPTTAVVSAA), 155 to 175 (AAVAPLPSAGAGLAQVVNGVV), 203 to 223 (FIVAGQSALTGVALLQPAVVG), 230 to 250 (TFLTAGTSAATGLGLLTLAGV), 261 to 281 (LASGTAATGLGLLGSAGVQLF), 284 to 304 (AFLLAVPTALGGVGSLAIAVV), 315 to 335 (LVVPNVVAGIAALQTAGAQFA), and 347 to 367 (LGAPGIAVLQTAGGHFAQGIG).

The protein belongs to the mycobacterial PE family.

It is found in the cell membrane. This is an uncharacterized protein from Mycobacterium bovis (strain ATCC BAA-935 / AF2122/97).